We begin with the raw amino-acid sequence, 176 residues long: Inner membrane-spanning protein YciB (176 aa).

5 helical membrane-spanning segments follow: residues Phe-3–Phe-23, Thr-49–His-69, Lys-72–Ala-92, Lys-118–Val-138, and Phe-149–Leu-169.

Belongs to the YciB family.

It localises to the cell inner membrane. Functionally, plays a role in cell envelope biogenesis, maintenance of cell envelope integrity and membrane homeostasis. This chain is Inner membrane-spanning protein YciB, found in Burkholderia mallei (strain NCTC 10247).